Here is a 247-residue protein sequence, read N- to C-terminus: Phosphoribosylaminoimidazole-succinocarboxamide synthase (247 aa).

It belongs to the SAICAR synthetase family.

It catalyses the reaction 5-amino-1-(5-phospho-D-ribosyl)imidazole-4-carboxylate + L-aspartate + ATP = (2S)-2-[5-amino-1-(5-phospho-beta-D-ribosyl)imidazole-4-carboxamido]succinate + ADP + phosphate + 2 H(+). Its pathway is purine metabolism; IMP biosynthesis via de novo pathway; 5-amino-1-(5-phospho-D-ribosyl)imidazole-4-carboxamide from 5-amino-1-(5-phospho-D-ribosyl)imidazole-4-carboxylate: step 1/2. This is Phosphoribosylaminoimidazole-succinocarboxamide synthase from Prochlorococcus marinus (strain NATL1A).